Consider the following 341-residue polypeptide: Protein quaking-A (341 aa).

The KH domain occupies 87–153; sequence FVPVKEYPDY…WEHLNEDLHV (67 aa). An SH3-binding motif is present at residues 276–279; that stretch reads PPTP. The Nuclear localization signal signature appears at 324-330; that stretch reads RVHPYQR.

Belongs to the quaking family. In terms of assembly, homodimer; does not require RNA to homodimerize.

It localises to the cytoplasm. Its subcellular location is the nucleus. In terms of biological role, RNA reader protein, which recognizes and binds specific RNAs, thereby regulating RNA metabolic processes, such as pre-mRNA splicing, circular RNA (circRNA) formation, mRNA export, mRNA stability and/or translation. Involved in various cellular processes, such as mRNA storage into stress granules, apoptosis, interferon response, glial cell fate and development. Binds to the 5'-NACUAAY-N(1,20)-UAAY-3' RNA core sequence. Acts as a mRNA modification reader that specifically recognizes and binds mRNA transcripts modified by internal N(7)-methylguanine (m7G). Promotes the formation of circular RNAs (circRNAs): acts by binding to sites flanking circRNA-forming exons. CircRNAs are produced by back-splicing circularization of pre-mRNAs. Required to protect and promote stability of mRNAs which promotes oligodendrocyte differentiation. Acts as an important regulator of muscle development: required during early skeletal myofibril formation by regulating the accumulation of the muscle-specific tropomyosin-3 (tpm3) transcripts. The chain is Protein quaking-A from Danio rerio (Zebrafish).